The following is a 151-amino-acid chain: F-box protein GID2 (151 aa).

Basic and acidic residues predominate over residues 1-25; that stretch reads MKRSTTDSDLAGDAHNETNKKMKST. A disordered region spans residues 1-27; that stretch reads MKRSTTDSDLAGDAHNETNKKMKSTEE. The region spanning 29-75 is the F-box domain; sequence EIGFSNLDENLVYEVLKHVDAKTLAMSSCVSKIWHKTAQDERLWELI.

Part of some SCF(GID2) complex, which consist of SKP1B, CUL1 cullin, GID2/SLY1 and some RING box protein. Interacts directly with SKP1A and SKP1B. Interacts directly with DELLA proteins GAI, RGA, RGL1, RGL3 and probably RGL2. May have a higher affinity for phosphorylated DELLA proteins. As to expression, expressed in all tissues tested, including rosette leaves, green siliques, flowers, stems, cauline leaves and seedlings.

Its subcellular location is the nucleus. The protein operates within protein modification; protein ubiquitination. In terms of biological role, essential component of the SCF-type E3 ligase complex, SCF(GID2), a complex that positively regulates the gibberellin signaling pathway. Upon gibberellin treatment, the SCF(GID2) complex mediates the ubiquitination and subsequent degradation of DELLA proteins (GAI, RGA and RGL2), some repressors of the gibberellin pathway, leading to activate the pathway. This chain is F-box protein GID2 (GID2), found in Arabidopsis thaliana (Mouse-ear cress).